Here is a 205-residue protein sequence, read N- to C-terminus: Ribosomal RNA small subunit methyltransferase G (205 aa).

S-adenosyl-L-methionine is bound by residues Gly71, Phe76, 120–121 (IE), and Arg134.

This sequence belongs to the methyltransferase superfamily. RNA methyltransferase RsmG family.

It is found in the cytoplasm. It catalyses the reaction guanosine(527) in 16S rRNA + S-adenosyl-L-methionine = N(7)-methylguanosine(527) in 16S rRNA + S-adenosyl-L-homocysteine. Its function is as follows. Specifically methylates the N7 position of guanine in position 527 of 16S rRNA. This is Ribosomal RNA small subunit methyltransferase G from Paramagnetospirillum magneticum (strain ATCC 700264 / AMB-1) (Magnetospirillum magneticum).